The primary structure comprises 124 residues: Aspartate 1-decarboxylase (124 aa).

Catalysis depends on serine 21, which acts as the Schiff-base intermediate with substrate; via pyruvic acid. Serine 21 is modified (pyruvic acid (Ser)). Threonine 53 contacts substrate. Residue tyrosine 54 is the Proton donor of the active site. 69 to 71 (GAA) contributes to the substrate binding site.

The protein belongs to the PanD family. In terms of assembly, heterooctamer of four alpha and four beta subunits. The cofactor is pyruvate. In terms of processing, is synthesized initially as an inactive proenzyme, which is activated by self-cleavage at a specific serine bond to produce a beta-subunit with a hydroxyl group at its C-terminus and an alpha-subunit with a pyruvoyl group at its N-terminus.

The protein resides in the cytoplasm. The catalysed reaction is L-aspartate + H(+) = beta-alanine + CO2. Its pathway is cofactor biosynthesis; (R)-pantothenate biosynthesis; beta-alanine from L-aspartate: step 1/1. Its function is as follows. Catalyzes the pyruvoyl-dependent decarboxylation of aspartate to produce beta-alanine. The polypeptide is Aspartate 1-decarboxylase (Dehalococcoides mccartyi (strain CBDB1)).